The primary structure comprises 113 residues: Iron-sulfur cluster insertion protein ErpA (113 aa).

Residues Cys-41, Cys-105, and Cys-107 each contribute to the iron-sulfur cluster site.

This sequence belongs to the HesB/IscA family. As to quaternary structure, homodimer. Iron-sulfur cluster serves as cofactor.

Functionally, required for insertion of 4Fe-4S clusters for at least IspG. The polypeptide is Iron-sulfur cluster insertion protein ErpA (Actinobacillus pleuropneumoniae serotype 3 (strain JL03)).